A 343-amino-acid polypeptide reads, in one-letter code: Phenylalanine--tRNA ligase alpha subunit (343 aa).

Glu256 lines the Mg(2+) pocket.

The protein belongs to the class-II aminoacyl-tRNA synthetase family. Phe-tRNA synthetase alpha subunit type 1 subfamily. As to quaternary structure, tetramer of two alpha and two beta subunits. Requires Mg(2+) as cofactor.

It localises to the cytoplasm. It carries out the reaction tRNA(Phe) + L-phenylalanine + ATP = L-phenylalanyl-tRNA(Phe) + AMP + diphosphate + H(+). This Phytoplasma australiense protein is Phenylalanine--tRNA ligase alpha subunit.